Here is a 206-residue protein sequence, read N- to C-terminus: MTKGILGRKIGMTQVFAENGEVIPVTVIEAEPNIVLQKKTVESDGYEAIQIGFADAKKPNKPATGHAAKAETAPKRFIKEIRGVNLDEVEVGQAINVTTFAAGDLVDVTGTSKGKGFQGAIKRHNQSRGPMSHGSRYHRRPGSMGPVAPNRVFKGKALPGRMGGEQITMQNLEIVRVDEERNLLLVKGNVPGAKKSYVTVQSAVKA.

A disordered region spans residues 116 to 149 (GFQGAIKRHNQSRGPMSHGSRYHRRPGSMGPVAP).

It belongs to the universal ribosomal protein uL3 family. Part of the 50S ribosomal subunit. Forms a cluster with proteins L14 and L19.

In terms of biological role, one of the primary rRNA binding proteins, it binds directly near the 3'-end of the 23S rRNA, where it nucleates assembly of the 50S subunit. This is Large ribosomal subunit protein uL3 from Shouchella clausii (strain KSM-K16) (Alkalihalobacillus clausii).